Here is a 112-residue protein sequence, read N- to C-terminus: UPF0235 protein Atu2660 (112 aa).

The protein belongs to the UPF0235 family.

This is UPF0235 protein Atu2660 from Agrobacterium fabrum (strain C58 / ATCC 33970) (Agrobacterium tumefaciens (strain C58)).